The sequence spans 242 residues: C-reactive protein 3.3 (242 aa).

The first 24 residues, 1 to 24 (MKTFHGPTCGTAVSLCLLLFLTSA), serve as a signal peptide directing secretion. One can recognise a Pentraxin (PTX) domain in the interval 30–241 (ITSKVKFPPS…GVVLSPNEIC (212 aa)). Phosphocholine is bound by residues Thr-60 and Tyr-63. 2 disulfides stabilise this stretch: Cys-62-Cys-125 and Cys-112-Cys-144. The Ca(2+) site is built by Asp-85 and Asn-86. N-linked (GlcNAc...) asparagine glycosylation is present at Asn-147. Ca(2+)-binding residues include Gln-169, Asp-170, and Gln-180. Cys-207 and Cys-241 are disulfide-bonded.

This sequence belongs to the pentraxin family. Homopentamer. Pentraxin (or pentaxin) have a discoid arrangement of 5 non-covalently bound subunits. Ca(2+) is required as a cofactor.

The protein resides in the secreted. Functionally, might serve the role of immunoglobulins. The polypeptide is C-reactive protein 3.3 (Limulus polyphemus (Atlantic horseshoe crab)).